Reading from the N-terminus, the 132-residue chain is Small ribosomal subunit protein uS8c (132 aa).

Belongs to the universal ribosomal protein uS8 family. In terms of assembly, part of the 30S ribosomal subunit.

The protein localises to the plastid. The protein resides in the chloroplast. Functionally, one of the primary rRNA binding proteins, it binds directly to 16S rRNA central domain where it helps coordinate assembly of the platform of the 30S subunit. The protein is Small ribosomal subunit protein uS8c (rps8) of Nandina domestica (Heavenly bamboo).